A 398-amino-acid polypeptide reads, in one-letter code: 2,3-bisphosphoglycerate-independent phosphoglycerate mutase (398 aa).

This sequence belongs to the BPG-independent phosphoglycerate mutase family. A-PGAM subfamily.

The catalysed reaction is (2R)-2-phosphoglycerate = (2R)-3-phosphoglycerate. It functions in the pathway carbohydrate degradation; glycolysis; pyruvate from D-glyceraldehyde 3-phosphate: step 3/5. Its function is as follows. Catalyzes the interconversion of 2-phosphoglycerate and 3-phosphoglycerate. This is 2,3-bisphosphoglycerate-independent phosphoglycerate mutase from Methanosarcina barkeri (strain Fusaro / DSM 804).